A 137-amino-acid chain; its full sequence is Large ribosomal subunit protein uL16 (137 aa).

It belongs to the universal ribosomal protein uL16 family. In terms of assembly, part of the 50S ribosomal subunit.

Binds 23S rRNA and is also seen to make contacts with the A and possibly P site tRNAs. This chain is Large ribosomal subunit protein uL16, found in Xanthomonas axonopodis pv. citri (strain 306).